We begin with the raw amino-acid sequence, 1887 residues long: ATP-dependent DNA helicase tlh1 (1887 aa).

Over residues N329–D347 the composition is skewed to basic and acidic residues. 3 disordered regions span residues N329 to E372, E504 to D552, and M1110 to Q1135. 2 stretches are compositionally biased toward acidic residues: residues L360–E372 and S524–N533. Residues N540–N549 are compositionally biased toward low complexity. Basic and acidic residues predominate over residues E1112–A1131. The region spanning Y1200 to V1375 is the Helicase ATP-binding domain. Residues L1213–S1220 and M1240–L1247 contribute to the ATP site. Residues D1322–H1325 carry the DEAH box motif. In terms of domain architecture, Helicase C-terminal spans D1401–M1559. The segment at Y1613–P1643 is disordered. Over residues G1626 to T1642 the composition is skewed to low complexity. A CCHC-type zinc finger spans residues S1804–L1821.

This sequence belongs to the helicase family. RecQ subfamily.

The enzyme catalyses Couples ATP hydrolysis with the unwinding of duplex DNA by translocating in the 3'-5' direction.. It catalyses the reaction ATP + H2O = ADP + phosphate + H(+). In terms of biological role, a probable ATP-dependent 3'-5' DNA helicase. Has a role in telomerase-independent telomere maintenance. This is ATP-dependent DNA helicase tlh1 from Schizosaccharomyces pombe (strain 972 / ATCC 24843) (Fission yeast).